The following is a 215-amino-acid chain: GTP-binding nuclear protein Ran (215 aa).

A Small GTPase Ran-type domain is found at 6-170 (DIPTFKLVLV…LWLVRKLLGD (165 aa)). GTP contacts are provided by residues 17 to 24 (DGGTGKTT), 35 to 41 (EKKYVAT), glycine 67, 121 to 124 (NFVD), and 149 to 151 (SAK). Positions 36 to 44 (KKYVATLGV) are switch-I. The segment at 67 to 83 (GQEKFGGLRDGYYIQGQ) is switch-II. The interaction with RANBP1 stretch occupies residues 210-215 (DDDEDL).

It belongs to the small GTPase superfamily. Ran family. In terms of assembly, monomer. Interacts with RANGAP1, which promotes RAN-mediated GTP hydrolysis. Interacts with KPNB1. Interaction with KPNB1 inhibits RANGAP1-mediated stimulation of GTPase activity. Interacts with RCC1 which promotes the exchange of RAN-bound GDP by GTP. Interaction with KPNB1 inhibits RCC1-mediated exchange of RAN-bound GDP by GTP. Interacts (GTP-bound form) with TNPO1; the interaction is direct. Interacts with KPNB1 and with TNPO1; both inhibit RAN GTPase activity. Interacts (via C-terminus) with RANBP1, which alleviates the inhibition of RAN GTPase activity. Interacts with RANGRF, which promotes the release of bound guanine nucleotide. RANGRF and RCC1 compete for an overlapping binding site on RAN. Identified in a complex with KPNA2 and CSE1L; interaction with RANBP1 mediates dissociation of RAN from this complex. Interaction with both RANBP1 and KPNA2 promotes dissociation of the complex between RAN and KPNB1. Identified in a complex composed of RAN, RANGAP1 and RANBP1. Identified in a complex that contains TNPO1, RAN and RANBP1. Identified in a nuclear export complex with XPO1. Interaction with RANBP1 or RANBP2 induces a conformation change in the complex formed by XPO1 and RAN that triggers the release of the nuclear export signal of cargo proteins. Component of a nuclear export receptor complex composed of KPNB1, RAN, SNUPN and XPO1. It depends on Mg(2+) as a cofactor.

It is found in the nucleus. The protein localises to the nucleus envelope. The protein resides in the cytoplasm. Its subcellular location is the cytosol. GTPase involved in nucleocytoplasmic transport, participating both to the import and the export from the nucleus of proteins and RNAs. Switches between a cytoplasmic GDP- and a nuclear GTP-bound state by nucleotide exchange and GTP hydrolysis. Nuclear import receptors such as importin beta bind their substrates only in the absence of GTP-bound RAN and release them upon direct interaction with GTP-bound RAN, while export receptors behave in the opposite way. Thereby, RAN controls cargo loading and release by transport receptors in the proper compartment and ensures the directionality of the transport. Interaction with RANBP1 induces a conformation change in the complex formed by XPO1 and RAN that triggers the release of the nuclear export signal of cargo proteins. RAN (GTP-bound form) triggers microtubule assembly at mitotic chromosomes and is required for normal mitotic spindle assembly and chromosome segregation. Required for normal progress through mitosis. The polypeptide is GTP-binding nuclear protein Ran (ran-1) (Onchocerca volvulus).